We begin with the raw amino-acid sequence, 393 residues long: Cell division protein FtsZ 2 (393 aa).

The disordered stretch occupies residues 1-28; it reads MQDIVQDALDNAEAEQREMDGDGDGDEF. Residues 40–44, 127–129, Glu-158, Arg-161, and Asp-204 each bind GTP; these read GAGNN and GTG. Positions 339–393 are disordered; the sequence is GPSTQKQADKSRRELQDVDSKQRAADDAGAGGFGGAHSDGGQDEVEQENGLDVIR. Basic and acidic residues predominate over residues 345 to 364; it reads QADKSRRELQDVDSKQRAAD. A compositionally biased stretch (gly residues) spans 367 to 376; the sequence is GAGGFGGAHS.

This sequence belongs to the FtsZ family. In terms of assembly, homodimer. Polymerizes to form a dynamic ring structure in a strictly GTP-dependent manner. Interacts directly with several other division proteins.

The protein resides in the cytoplasm. Its function is as follows. Essential cell division protein that forms a contractile ring structure (Z ring) at the future cell division site. The regulation of the ring assembly controls the timing and the location of cell division. One of the functions of the FtsZ ring is to recruit other cell division proteins to the septum to produce a new cell wall between the dividing cells. Binds GTP and shows GTPase activity. Overexpression causes significant changes in cell morphology. The chain is Cell division protein FtsZ 2 from Halobacterium salinarum (strain ATCC 29341 / DSM 671 / R1).